The following is a 361-amino-acid chain: 3-galactosyl-N-acetylglucosaminide 4-alpha-L-fucosyltransferase FUT3 (361 aa).

Topologically, residues 1–15 are cytoplasmic; sequence MDPLGAAKPQWPWRR. Residues 16–34 traverse the membrane as a helical; Signal-anchor for type II membrane protein segment; that stretch reads CLAALLFQLLVAVCFFSYL. Residues 35–361 lie on the Lumenal side of the membrane; it reads RVSRDDATGS…TVRSIAAWFT (327 aa). The disordered stretch occupies residues 39–58; sequence DDATGSPRAPSGSSRQDTTP. N-linked (GlcNAc...) asparagine glycans are attached at residues Asn-154 and Asn-185.

It belongs to the glycosyltransferase 10 family. In terms of processing, glycosylated. In terms of tissue distribution, highly expressed in stomach, colon, small intestine, lung and kidney and to a lesser extent in salivary gland, bladder, uterus and liver.

The protein localises to the golgi apparatus. The protein resides in the golgi stack membrane. The catalysed reaction is a beta-D-galactosyl-(1-&gt;3)-N-acetyl-beta-D-glucosaminyl derivative + GDP-beta-L-fucose = a beta-D-galactosyl-(1-&gt;3)-[alpha-L-fucosyl-(1-&gt;4)]-N-acetyl-beta-D-glucosaminyl derivative + GDP + H(+). It carries out the reaction an N-acetyl-alpha-neuraminyl-(2-&gt;3)-beta-D-galactosyl-(1-&gt;4)-N-acetyl-beta-D-glucosaminyl derivative + GDP-beta-L-fucose = an alpha-Neu5Ac-(2-&gt;3)-beta-D-Gal-(1-&gt;4)-[alpha-L-Fuc-(1-&gt;3)]-beta-D-GlcNAc derivative + GDP + H(+). The enzyme catalyses a beta-D-galactosyl-(1-&gt;4)-N-acetyl-beta-D-glucosaminyl derivative + GDP-beta-L-fucose = a beta-D-galactosyl-(1-&gt;4)-[alpha-L-fucosyl-(1-&gt;3)]-N-acetyl-beta-D-glucosaminyl derivative + GDP + H(+). It catalyses the reaction an alpha-Neu5Ac-(2-&gt;3)-beta-D-Gal-(1-&gt;4)-beta-D-GlcNAc-(1-&gt;3)-beta-D-Gal-(1-&gt;4)-[alpha-L-Fuc-(1-&gt;3)]-beta-D-GlcNAc derivative + GDP-beta-L-fucose = an alpha-Neu5Ac-(2-&gt;3)-beta-D-Gal-(1-&gt;4)-[alpha-L-Fuc-(1-&gt;3)]-beta-D-GlcNAc-(1-&gt;3)-beta-D-Gal-(1-&gt;4)-[alpha-L-Fuc-(1-&gt;3)]-beta-D-GlcNAc derivative + GDP + H(+). The catalysed reaction is Lc4Cer + GDP-beta-L-fucose = a lactoside III(4)-a-Fuc-Lc4Cer + GDP + H(+). It carries out the reaction a beta-D-Gal-(1-&gt;3)-beta-D-GlcNAc-(1-&gt;3)-beta-D-Gal-(1-&gt;4)-beta-D-Glc-(1&lt;-&gt;1')-Cer(d18:1(4E)) + GDP-beta-L-fucose = a III(4)-a-Fuc-Lc4Cer(d18:1(4E)) + GDP + H(+). The enzyme catalyses N-acetyl-alpha-neuraminosyl-(2-&gt;3)-beta-D-galactosyl-(1-&gt;3)-[N-acetyl-alpha-neuraminosyl-(2-&gt;6)]-N-acetyl-beta-D-glucosaminyl-(1-&gt;3)-beta-D-galactosyl-(1-&gt;4)-beta-D-glucosyl-(1&lt;-&gt;1')-N-acyl-sphing-4-enine + GDP-beta-L-fucose = N-acetyl-alpha-neuraminosyl-(2-&gt;3)-beta-D-galactosyl-(1-&gt;3)-alpha-L-fucosyl-(1-&gt;4)-[N-acetyl-alpha-neuraminosyl-(2-&gt;6)-N-acetyl-beta-D-glucosaminyl-(1-&gt;3)]-beta-D-galactosyl-(1-&gt;4)-beta-D-glucosyl-(1&lt;-&gt;1')-N-acyl-sphing-4-enine + GDP + H(+). It catalyses the reaction N-acetyl-alpha-neuraminosyl-(2-&gt;3)-beta-D-galactosyl-(1-&gt;3)-N-acetyl-beta-D-glucosaminyl-(1-&gt;3)-beta-D-galactosyl-(1-&gt;4)-beta-D-glucosyl-(1&lt;-&gt;1')-N-acyl-sphing-4-enine + GDP-beta-L-fucose = N-acetyl-alpha-neuraminosyl-(2-&gt;3)-beta-D-galactosyl-(1-&gt;3)-alpha-L-fucosyl-(1-&gt;4)-[N-acetyl-beta-D-glucosaminyl-(1-&gt;3)]-beta-D-galactosyl-(1-&gt;4)-beta-D-glucosyl-(1&lt;-&gt;1')-N-acyl-sphing-4-enine + GDP + H(+). The catalysed reaction is beta-D-galactosyl-(1-&gt;3)-N-acetyl-D-glucosamine + GDP-beta-L-fucose = beta-D-galactosyl-(1-&gt;3)-[alpha-L-fucosyl-(1-&gt;4)]-N-acetyl-D-glucosamine + GDP + H(+). It carries out the reaction alpha-L-Fuc-(1-&gt;2)-beta-D-Gal-(1-&gt;3)-D-GlcNAc + GDP-beta-L-fucose = alpha-L-Fuc-(1-&gt;2)-beta-D-Gal-(1-&gt;3)-[alpha-L-Fuc-(1-&gt;4)]-D-GlcNAc + GDP + H(+). The enzyme catalyses alpha-L-Fuc-(1-&gt;2)-beta-D-Gal-(1-&gt;4)-D-GlcNAc + GDP-beta-L-fucose = alpha-L-Fuc-(1-&gt;2)-beta-D-Gal-(1-&gt;4)-[alpha-L-Fuc-(1-&gt;3)]-D-GlcNAc + GDP + H(+). It catalyses the reaction beta-D-galactosyl-(1-&gt;4)-N-acetyl-D-glucosamine + GDP-beta-L-fucose = beta-D-galactosyl-(1-&gt;4)-[alpha-L-fucosyl-(1-&gt;3)]-N-acetyl-D-glucosamine + GDP + H(+). The catalysed reaction is lactose + GDP-beta-L-fucose = beta-D-galactosyl-(1-&gt;4)-[alpha-L-fucosyl-(1-&gt;3)]-D-glucose + GDP + H(+). It carries out the reaction an alpha-Neu5Ac-(2-&gt;3)-beta-D-Gal-(1-&gt;3)-D-GlcNAc derivative + GDP-beta-L-fucose = an alpha-Neu5Ac-(2-&gt;3)-beta-D-Gal-(1-&gt;3)-[alpha-L-Fuc-(1-&gt;4)]-beta-D-GlcNAc derivative + GDP + H(+). The protein operates within protein modification; protein glycosylation. Its function is as follows. Catalyzes the transfer of L-fucose, from a guanosine diphosphate-beta-L-fucose, to both the subterminal N-acetyl glucosamine (GlcNAc) of type 1 chain (beta-D-Gal-(1-&gt;3)-beta-D-GlcNAc) glycolipids and oligosaccharides via an alpha(1,4) linkage, and the subterminal glucose (Glc) or GlcNAc of type 2 chain (beta-D-Gal-(1-&gt;4)-beta-D-GlcNAc) oligosaccharides via an alpha(1,3) linkage, independently of the presence of terminal alpha-L-fucosyl-(1,2) moieties on the terminal galactose of these acceptors. Through its catalytic activity, participates in the synthesis of antigens of the Lewis blood group system, i.e. Lewis a (Le(a)), lewis b (Le(b)), Lewis x/SSEA-1 (Le(x)) and lewis y (Le(y)) antigens. Also catalyzes the transfer of L-fucose to subterminal GlcNAc of sialyl- and disialyl-lactotetraosylceramide to produce sialyl Lewis a (sLe(a)) and disialyl Lewis a via an alpha(1,4) linkage and therefore may regulate cell surface sLe(a) expression and consequently regulates adhesive properties to E-selectin, cell proliferation and migration. Catalyzes the transfer of an L-fucose to 3'-sialyl-N-acetyllactosamine by an alpha(1,3) linkage, which allows the formation of sialyl-Lewis x structure and therefore may regulate the sialyl-Lewis x surface antigen expression and consequently adhesive properties to E-selectin. Prefers type 1 chain over type 2 acceptors. Type 1 tetrasaccharide is a better acceptor than type 1 disaccharide suggesting that a beta anomeric configuration of GlcNAc in the substrate is preferred. Lewis-positive (Le(+)) individuals have an active enzyme while Lewis-negative (Le(-)) individuals have an inactive enzyme. This Homo sapiens (Human) protein is 3-galactosyl-N-acetylglucosaminide 4-alpha-L-fucosyltransferase FUT3.